The following is a 119-amino-acid chain: Protein TusC (119 aa).

Belongs to the DsrF/TusC family. Heterohexamer, formed by a dimer of trimers. The hexameric TusBCD complex contains 2 copies each of TusB, TusC and TusD. The TusBCD complex interacts with TusE.

It localises to the cytoplasm. Its function is as follows. Part of a sulfur-relay system required for 2-thiolation of 5-methylaminomethyl-2-thiouridine (mnm(5)s(2)U) at tRNA wobble positions. The chain is Protein TusC from Cronobacter sakazakii (strain ATCC BAA-894) (Enterobacter sakazakii).